Reading from the N-terminus, the 325-residue chain is Tagatose 1,6-diphosphate aldolase 1 (325 aa).

The protein belongs to the aldolase LacD family.

It catalyses the reaction D-tagatofuranose 1,6-bisphosphate = D-glyceraldehyde 3-phosphate + dihydroxyacetone phosphate. It participates in carbohydrate metabolism; D-tagatose 6-phosphate degradation; D-glyceraldehyde 3-phosphate and glycerone phosphate from D-tagatose 6-phosphate: step 2/2. This chain is Tagatose 1,6-diphosphate aldolase 1 (lacD1), found in Streptococcus pyogenes serotype M1.